A 550-amino-acid chain; its full sequence is Keratin, type II cytoskeletal 74 (550 aa).

Positions 1 to 140 are head; it reads MSRQLNIKSG…DPEIQKVRAQ (140 aa). The interval 141 to 176 is coil 1A; sequence EREQIMALNNKFASFIDKVRFLEQQNQVLGTKWELL. The IF rod domain occupies 141–468; that stretch reads EREQIMALNN…KLLEGEECWM (328 aa). Residues 177–195 form a linker 1 region; it reads QQMDLNNCRKNLEPILEGY. Residues 196–287 are coil 1B; sequence IGNLRKQLEM…CLYDAEVAQI (92 aa). Residues 288 to 311 form a linker 12 region; that stretch reads QTHTSETSVILSMDNNRYLDLDSI. Residues 312-464 form a coil 2 region; that stretch reads IAEVRAQYED…ATYSKLLEGE (153 aa). Residues 465 to 550 form a tail region; it reads ECWMSGENPS…VSSRARKAAR (86 aa). The interval 491 to 550 is disordered; the sequence is HPGSSASTDLGASTMASTGTSSSSSTQSGQTRAKGARVGDPKDSQDKSTPVSSRARKAAR. Over residues 502 to 521 the composition is skewed to low complexity; it reads ASTMASTGTSSSSSTQSGQT. Residues 527–536 are compositionally biased toward basic and acidic residues; the sequence is RVGDPKDSQD.

It belongs to the intermediate filament family. As to quaternary structure, heterotetramer of two type I and two type II keratins.

Has a role in hair formation. Specific component of keratin intermediate filaments in the inner root sheath (IRS) of the hair follicle. This is Keratin, type II cytoskeletal 74 (KRT74) from Bos taurus (Bovine).